The primary structure comprises 68 residues: Alpha-conotoxin-like Ca1.2 (68 aa).

Positions 1 to 21 (MGMRMMFTVFLLVVLATTVVS) are cleaved as a signal peptide. Positions 22 to 48 (FTSDRASEGRNAAAKDKASDLVALTVR) are excised as a propeptide. Cystine bridges form between Cys-50/Cys-56 and Cys-51/Cys-64. Positions 52–54 (AIR) are lacks the Ser-Xaa-Pro motif that is crucial for potent interaction with nAChR. A Sulfotyrosine modification is found at Tyr-63. The residue at position 64 (Cys-64) is a Cysteine amide. Positions 65 to 68 (GGIY) are excised as a propeptide.

It belongs to the conotoxin A superfamily. Expressed by the venom duct.

The protein resides in the secreted. Its function is as follows. Alpha-conotoxins act on postsynaptic membranes, they bind to the nicotinic acetylcholine receptors (nAChR) and thus inhibit them. Has possibly a distinct nAChR binding mode from other alpha-conotoxins, due to a different three residue motif (lacks the Ser-Xaa-Pro motif). In Conus caracteristicus (Characteristic cone), this protein is Alpha-conotoxin-like Ca1.2.